A 355-amino-acid chain; its full sequence is Methylthioribose-1-phosphate isomerase (355 aa).

Residues 50 to 52 (RGA), arginine 93, and glutamine 198 each bind substrate. The active-site Proton donor is aspartate 239. 249–250 (NK) contacts substrate.

This sequence belongs to the eIF-2B alpha/beta/delta subunits family. MtnA subfamily. As to quaternary structure, homodimer.

It catalyses the reaction 5-(methylsulfanyl)-alpha-D-ribose 1-phosphate = 5-(methylsulfanyl)-D-ribulose 1-phosphate. The protein operates within amino-acid biosynthesis; L-methionine biosynthesis via salvage pathway; L-methionine from S-methyl-5-thio-alpha-D-ribose 1-phosphate: step 1/6. Functionally, catalyzes the interconversion of methylthioribose-1-phosphate (MTR-1-P) into methylthioribulose-1-phosphate (MTRu-1-P). The chain is Methylthioribose-1-phosphate isomerase from Geobacillus thermodenitrificans (strain NG80-2).